A 380-amino-acid polypeptide reads, in one-letter code: Alkaline protease (380 aa).

The signal sequence occupies residues 1-27; sequence MKKPLGKIVASTALLISVAFSSSIASA. Positions 28 to 111 are excised as a propeptide; it reads AEEAKEKYLI…IEEDAEVTTM (84 aa). Residues 34-111 form the Inhibitor I9 domain; sequence KYLIGFNEQE…IEEDAEVTTM (78 aa). Gln113 is a binding site for Ca(2+). One can recognise a Peptidase S8 domain in the interval 116-379; it reads PWGISRVQAP…SGLVNAEAAT (264 aa). The Charge relay system role is filled by Asp143. Asp151 serves as a coordination point for Ca(2+). The active-site Charge relay system is the His173. The Ca(2+) site is built by Leu184, Asn186, Ile188, Val190, Ala274, Tyr276, and Ala279. Ser326 serves as the catalytic Charge relay system.

The protein belongs to the peptidase S8 family. It depends on Ca(2+) as a cofactor.

It localises to the secreted. In Shouchella clausii (Alkalihalobacillus clausii), this protein is Alkaline protease.